Reading from the N-terminus, the 130-residue chain is Small ribosomal subunit protein uS11 (130 aa).

The protein belongs to the universal ribosomal protein uS11 family. As to quaternary structure, part of the 30S ribosomal subunit. Interacts with proteins S7 and S18. Binds to IF-3.

Located on the platform of the 30S subunit, it bridges several disparate RNA helices of the 16S rRNA. Forms part of the Shine-Dalgarno cleft in the 70S ribosome. This Thermosynechococcus vestitus (strain NIES-2133 / IAM M-273 / BP-1) protein is Small ribosomal subunit protein uS11.